Consider the following 366-residue polypeptide: BIIDXI-like protein At5g11420 (366 aa).

The N-terminal stretch at 1 to 22 is a signal peptide; the sequence is MKGGSLSFLFVLLIATITSVIC. N-linked (GlcNAc...) asparagine glycosylation is found at N98, N122, and N209.

Interacts with PME3.

The protein localises to the secreted. The protein resides in the cell wall. Together with BIIDXI, acts as a positive regulator of PME3 activity during several developmental processes, including seed germination and endosperm (testa) rupture at the micropyle, probably by modulating the pectin status in cell walls. The polypeptide is BIIDXI-like protein At5g11420 (Arabidopsis thaliana (Mouse-ear cress)).